The chain runs to 207 residues: Protein GrpE (207 aa).

The tract at residues 1–31 (MSEHQTPPEEDLTVANGDSAEAVSEPDVTVA) is disordered.

Belongs to the GrpE family. In terms of assembly, homodimer.

The protein resides in the cytoplasm. In terms of biological role, participates actively in the response to hyperosmotic and heat shock by preventing the aggregation of stress-denatured proteins, in association with DnaK and GrpE. It is the nucleotide exchange factor for DnaK and may function as a thermosensor. Unfolded proteins bind initially to DnaJ; upon interaction with the DnaJ-bound protein, DnaK hydrolyzes its bound ATP, resulting in the formation of a stable complex. GrpE releases ADP from DnaK; ATP binding to DnaK triggers the release of the substrate protein, thus completing the reaction cycle. Several rounds of ATP-dependent interactions between DnaJ, DnaK and GrpE are required for fully efficient folding. The chain is Protein GrpE from Synechococcus elongatus (strain ATCC 33912 / PCC 7942 / FACHB-805) (Anacystis nidulans R2).